Consider the following 744-residue polypeptide: MAADKPADQGAEKHEGAGQSSGVTDQEKELSTSAFQAFTSGNYDACLQHLACLQDINKDDYKIILNTAVAEFFKNNQTTTDNLRQTLNQLKNQVHSAVEEMDGLDDVENSMLYYNQAVILYHLRQHTEAIAVGEKLYQFIEPFEEKFAQAVCFLLVDLYILTHQAEKALHLLAVLEKMISQGSGNKNGKSETGNNSSKDGSNPKAESAALIEAAKSKIHQYKVRGYIQMKSLKACKREIKSVMNTAGNSAPSLFLKSNFEYLRGNYRKAVKLLNSSNIAEHPGFMKTGECLRCMFWNNLGCIHFAMSKHNLGIFYFKKALQENDNVCAQLSAGNTDPGKKFSGRPMCTLLANKRYELLYNCGIQLLHVGRPLAAFECLVEAVQVYHANPRLWLRLAECCIAANKGTSEQETKGLPTKKGIVQSIVGQGYHRKIVLASQSIQNTVYNDGQSSAIPVASVEFAAICLRNALLLLPEEQQDPKQENGSKSSSQLGGNAESSESSETCSSKSHDGDKLIPAPPSSPLRKQELENLKCSILACSAYVALALGDNLMALNHADQLLQQPKLSGSLKFLGHLYAAEALISLDRISDAITHLNPENVTDVSLGISSNEQDQGSDKGENEAMESSGKRAPQCYPSSVNSARTVMLFNLGSAYCLRSEYDKARKCLHQAASMIHPKEVPPEAILLAVYLELQNGNTQLALQMIKRNQLLPAVKAHSDVRKKTVFQPVHPIQPIQMPAFTTVQRK.

A compositionally biased stretch (basic and acidic residues) spans 1 to 16; sequence MAADKPADQGAEKHEG. 4 disordered regions span residues 1-26, 183-204, 475-522, and 602-632; these read MAAD…VTDQ, SGNK…SNPK, EQQD…PSSP, and VSLG…RAPQ. N-acetylalanine is present on A2. The span at 183–200 shows a compositional bias: polar residues; the sequence is SGNKNGKSETGNNSSKDG. The span at 496-506 shows a compositional bias: low complexity; sequence ESSESSETCSS. A compositionally biased stretch (polar residues) spans 602-612; it reads VSLGISSNEQD.

This sequence belongs to the CNOT10 family. Component of the CCR4-NOT complex; distinct complexes seem to exist that differ in the participation of probably mutually exclusive catalytic subunits. CNOT10 and CNOT11 form a subcomplex docked to the CNOT1 scaffold.

It is found in the cytoplasm. The protein localises to the nucleus. Its function is as follows. Component of the CCR4-NOT complex which is one of the major cellular mRNA deadenylases and is linked to various cellular processes including bulk mRNA degradation, miRNA-mediated repression, translational repression during translational initiation and general transcription regulation. Additional complex functions may be a consequence of its influence on mRNA expression. Is not required for association of CNOT7 to the CCR4-NOT complex. The sequence is that of CCR4-NOT transcription complex subunit 10 (Cnot10) from Rattus norvegicus (Rat).